A 373-amino-acid polypeptide reads, in one-letter code: Geraniol dehydrogenase (373 aa).

Zn(2+) is bound by residues Cys47, His67, Cys96, Cys99, Cys102, Cys110, and Cys175.

The protein belongs to the zinc-containing alcohol dehydrogenase family. Homodimer. It depends on Zn(2+) as a cofactor.

It carries out the reaction (2E)-geraniol + NAD(+) = (2E)-geranial + NADH + H(+). The catalysed reaction is perillyl alcohol + NAD(+) = perillyl aldehyde + NADH + H(+). The protein operates within terpene metabolism; monoterpene degradation. Is inhibited by EDTA, N-ethylmaleimide, diethylpyrocarbonate, and 1-cyclohexyl-N-(2-morpholinoethyl)carbodiimide in vitro. In terms of biological role, involved in the degradation of the monoterpenes beta-myrcene and limonene. During anaerobic degradation of beta-myrcene, catalyzes the NAD(+)-dependent oxidation of geraniol to geranial. Can also catalyze the oxidation of (S)-perillyl alcohol to perillyl aldehyde, and to a lesser extent, the oxidation of nerol, citronellol, cumic alcohol, and benzyl alcohol. Cannot use NADP(+) instead of NAD(+) as cosubstrate. The sequence is that of Geraniol dehydrogenase from Castellaniella defragrans (strain DSM 12143 / CCUG 39792 / 65Phen) (Alcaligenes defragrans).